The following is a 308-amino-acid chain: Elongation factor Ts (308 aa).

Residues 80–83 form an involved in Mg(2+) ion dislocation from EF-Tu region; it reads TDFV.

The protein belongs to the EF-Ts family.

It is found in the cytoplasm. In terms of biological role, associates with the EF-Tu.GDP complex and induces the exchange of GDP to GTP. It remains bound to the aminoacyl-tRNA.EF-Tu.GTP complex up to the GTP hydrolysis stage on the ribosome. This Parvibaculum lavamentivorans (strain DS-1 / DSM 13023 / NCIMB 13966) protein is Elongation factor Ts.